Reading from the N-terminus, the 99-residue chain is Small ribosomal subunit protein bS20 (99 aa).

The span at 1-20 (MASAKPKKKNPRLASGRKRA) shows a compositional bias: basic residues. Residues 1–29 (MASAKPKKKNPRLASGRKRARQDVKLNAA) are disordered.

This sequence belongs to the bacterial ribosomal protein bS20 family.

Binds directly to 16S ribosomal RNA. The protein is Small ribosomal subunit protein bS20 of Paracidovorax citrulli (strain AAC00-1) (Acidovorax citrulli).